A 957-amino-acid polypeptide reads, in one-letter code: Glycine dehydrogenase (decarboxylating) (957 aa).

Lys708 is modified (N6-(pyridoxal phosphate)lysine).

This sequence belongs to the GcvP family. As to quaternary structure, the glycine cleavage system is composed of four proteins: P, T, L and H. Requires pyridoxal 5'-phosphate as cofactor.

It carries out the reaction N(6)-[(R)-lipoyl]-L-lysyl-[glycine-cleavage complex H protein] + glycine + H(+) = N(6)-[(R)-S(8)-aminomethyldihydrolipoyl]-L-lysyl-[glycine-cleavage complex H protein] + CO2. Functionally, the glycine cleavage system catalyzes the degradation of glycine. The P protein binds the alpha-amino group of glycine through its pyridoxal phosphate cofactor; CO(2) is released and the remaining methylamine moiety is then transferred to the lipoamide cofactor of the H protein. In Escherichia coli O17:K52:H18 (strain UMN026 / ExPEC), this protein is Glycine dehydrogenase (decarboxylating).